The primary structure comprises 1238 residues: DNA-directed RNA polymerase subunit beta (1238 aa).

The disordered stretch occupies residues 1186 to 1238 (IEGREDTPPEEVYEEGYEEGFEEESEELPEDIDFEPDSFDIENDDLDLEDFDI). Over residues 1193–1238 (PPEEVYEEGYEEGFEEESEELPEDIDFEPDSFDIENDDLDLEDFDI) the composition is skewed to acidic residues.

The protein belongs to the RNA polymerase beta chain family. As to quaternary structure, the RNAP catalytic core consists of 2 alpha, 1 beta, 1 beta' and 1 omega subunit. When a sigma factor is associated with the core the holoenzyme is formed, which can initiate transcription.

It carries out the reaction RNA(n) + a ribonucleoside 5'-triphosphate = RNA(n+1) + diphosphate. Its function is as follows. DNA-dependent RNA polymerase catalyzes the transcription of DNA into RNA using the four ribonucleoside triphosphates as substrates. This is DNA-directed RNA polymerase subunit beta from Thermoanaerobacter sp. (strain X514).